The following is a 437-amino-acid chain: CCA-adding enzyme (437 aa).

2 residues coordinate ATP: Ser50 and Lys53. 2 residues coordinate CTP: Ser50 and Lys53. 3 residues coordinate Mg(2+): Asp61, Asp63, and Asp112. Residues His135, Lys155, and Tyr164 each contribute to the ATP site. Residues His135, Lys155, and Tyr164 each contribute to the CTP site.

The protein belongs to the tRNA nucleotidyltransferase/poly(A) polymerase family. Archaeal CCA-adding enzyme subfamily. Homodimer. The cofactor is Mg(2+).

The catalysed reaction is a tRNA precursor + 2 CTP + ATP = a tRNA with a 3' CCA end + 3 diphosphate. The enzyme catalyses a tRNA with a 3' CCA end + 2 CTP + ATP = a tRNA with a 3' CCACCA end + 3 diphosphate. Catalyzes the addition and repair of the essential 3'-terminal CCA sequence in tRNAs without using a nucleic acid template. Adds these three nucleotides in the order of C, C, and A to the tRNA nucleotide-73, using CTP and ATP as substrates and producing inorganic pyrophosphate. tRNA 3'-terminal CCA addition is required both for tRNA processing and repair. Also involved in tRNA surveillance by mediating tandem CCA addition to generate a CCACCA at the 3' terminus of unstable tRNAs. While stable tRNAs receive only 3'-terminal CCA, unstable tRNAs are marked with CCACCA and rapidly degraded. The polypeptide is CCA-adding enzyme (Thermoplasma volcanium (strain ATCC 51530 / DSM 4299 / JCM 9571 / NBRC 15438 / GSS1)).